The following is a 122-amino-acid chain: S-adenosylmethionine decarboxylase proenzyme (122 aa).

Residue Ser63 is the Schiff-base intermediate with substrate; via pyruvic acid of the active site. A Pyruvic acid (Ser); by autocatalysis modification is found at Ser63. Residue His68 is the Proton acceptor; for processing activity of the active site. Catalysis depends on Cys83, which acts as the Proton donor; for catalytic activity.

The protein belongs to the prokaryotic AdoMetDC family. Type 1 subfamily. In terms of assembly, heterotetramer of two alpha and two beta chains arranged as a dimer of alpha/beta heterodimers. It depends on pyruvate as a cofactor. Is synthesized initially as an inactive proenzyme. Formation of the active enzyme involves a self-maturation process in which the active site pyruvoyl group is generated from an internal serine residue via an autocatalytic post-translational modification. Two non-identical subunits are generated from the proenzyme in this reaction, and the pyruvate is formed at the N-terminus of the alpha chain, which is derived from the carboxyl end of the proenzyme. The post-translation cleavage follows an unusual pathway, termed non-hydrolytic serinolysis, in which the side chain hydroxyl group of the serine supplies its oxygen atom to form the C-terminus of the beta chain, while the remainder of the serine residue undergoes an oxidative deamination to produce ammonia and the pyruvoyl group blocking the N-terminus of the alpha chain.

It catalyses the reaction S-adenosyl-L-methionine + H(+) = S-adenosyl 3-(methylsulfanyl)propylamine + CO2. It participates in amine and polyamine biosynthesis; S-adenosylmethioninamine biosynthesis; S-adenosylmethioninamine from S-adenosyl-L-methionine: step 1/1. In terms of biological role, catalyzes the decarboxylation of S-adenosylmethionine to S-adenosylmethioninamine (dcAdoMet), the propylamine donor required for the synthesis of the polyamines spermine and spermidine from the diamine putrescine. This Methanococcus maripaludis (strain C7 / ATCC BAA-1331) protein is S-adenosylmethionine decarboxylase proenzyme.